Consider the following 211-residue polypeptide: Large ribosomal subunit protein bL25 (211 aa).

Residues 1 to 18 (MAKTHEIKAERRADEGKG) are compositionally biased toward basic and acidic residues. The segment at 1-20 (MAKTHEIKAERRADEGKGAS) is disordered.

It belongs to the bacterial ribosomal protein bL25 family. CTC subfamily. In terms of assembly, part of the 50S ribosomal subunit; part of the 5S rRNA/L5/L18/L25 subcomplex. Contacts the 5S rRNA. Binds to the 5S rRNA independently of L5 and L18.

In terms of biological role, this is one of the proteins that binds to the 5S RNA in the ribosome where it forms part of the central protuberance. In Xanthomonas oryzae pv. oryzae (strain MAFF 311018), this protein is Large ribosomal subunit protein bL25.